Here is a 155-residue protein sequence, read N- to C-terminus: Ubiquitin-conjugating enzyme E2 14 (155 aa).

The UBC core domain maps to 7-154; sequence SSSRRLTKEY…ARDYVEQFAK (148 aa). Catalysis depends on C91, which acts as the Glycyl thioester intermediate.

This sequence belongs to the ubiquitin-conjugating enzyme family.

The enzyme catalyses S-ubiquitinyl-[E1 ubiquitin-activating enzyme]-L-cysteine + [E2 ubiquitin-conjugating enzyme]-L-cysteine = [E1 ubiquitin-activating enzyme]-L-cysteine + S-ubiquitinyl-[E2 ubiquitin-conjugating enzyme]-L-cysteine.. Its pathway is protein modification; protein ubiquitination. Functionally, catalyzes the covalent attachment of ubiquitin to other proteins. Mediates the selective degradation of short-lived and abnormal proteins. The polypeptide is Ubiquitin-conjugating enzyme E2 14 (ubc14) (Schizosaccharomyces pombe (strain 972 / ATCC 24843) (Fission yeast)).